The chain runs to 210 residues: Proteasome subunit beta (210 aa).

Positions 1 to 9 (MDNDKHLKG) are cleaved as a propeptide — removed in mature form; by autocatalysis. Thr10 acts as the Nucleophile in catalysis.

It belongs to the peptidase T1B family. The 20S proteasome core is composed of 14 alpha and 14 beta subunits that assemble into four stacked heptameric rings, resulting in a barrel-shaped structure. The two inner rings, each composed of seven catalytic beta subunits, are sandwiched by two outer rings, each composed of seven alpha subunits. The catalytic chamber with the active sites is on the inside of the barrel. Has a gated structure, the ends of the cylinder being occluded by the N-termini of the alpha-subunits. Is capped at one or both ends by the proteasome regulatory ATPase, PAN.

It localises to the cytoplasm. It carries out the reaction Cleavage of peptide bonds with very broad specificity.. Its activity is regulated as follows. The formation of the proteasomal ATPase PAN-20S proteasome complex, via the docking of the C-termini of PAN into the intersubunit pockets in the alpha-rings, triggers opening of the gate for substrate entry. Interconversion between the open-gate and close-gate conformations leads to a dynamic regulation of the 20S proteasome proteolysis activity. Component of the proteasome core, a large protease complex with broad specificity involved in protein degradation. This chain is Proteasome subunit beta, found in Methanohalophilus mahii (strain ATCC 35705 / DSM 5219 / SLP).